The chain runs to 1171 residues: ATP-dependent helicase/deoxyribonuclease subunit B (1171 aa).

The 343-residue stretch at 1–343 (MSLRFVIGRA…LVAEENYRYR (343 aa)) folds into the UvrD-like helicase ATP-binding domain. 8 to 15 (GRAGSGKS) lines the ATP pocket. The UvrD-like helicase C-terminal domain occupies 281-587 (MEQPRFHSPA…QFANIPPSLD (307 aa)). Residues cysteine 805, cysteine 1129, cysteine 1132, and cysteine 1138 each coordinate [4Fe-4S] cluster.

The protein belongs to the helicase family. AddB/RexB type 1 subfamily. Heterodimer of AddA and AddB. The cofactor is Mg(2+). [4Fe-4S] cluster serves as cofactor.

Functionally, the heterodimer acts as both an ATP-dependent DNA helicase and an ATP-dependent, dual-direction single-stranded exonuclease. Recognizes the chi site generating a DNA molecule suitable for the initiation of homologous recombination. The AddB subunit has 5' -&gt; 3' nuclease activity but not helicase activity. In Bacillus thuringiensis (strain Al Hakam), this protein is ATP-dependent helicase/deoxyribonuclease subunit B.